Reading from the N-terminus, the 351-residue chain is MKNLTTRQAQILKAIINEYIAYPVPVGSKLLTKKYFKNLSGGTLRNEMAVLEKEGYLKKNHISSGRIPSQLGYQYYVKLLTKNDDKSNLKTRLRAIILQKHKTIDEIIELGVKFINEMVNLPVVLTHFSSDEVLKKIDLIMLDQSCALLLLVSASGNVFKKTISYANQRQFEDIMVCVRIFNDRIIDTRFCDIAQHLDVLKEIIRSKVHEYQYVIDEILFKLFNFEEFQQARKQVYGIHYLAQQPEFANQERLTRILNLLEDTSVWQQMAFMNQNNQTTNITFGDKLGLEGEEVSVASTLINTTNESKHQLAIVGPTRMDYQKVKALLLTLKEEIEEYDKQLHGGKTTSST.

It belongs to the HrcA family.

Negative regulator of class I heat shock genes (grpE-dnaK-dnaJ and groELS operons). Prevents heat-shock induction of these operons. In Mycoplasma pneumoniae (strain ATCC 29342 / M129 / Subtype 1) (Mycoplasmoides pneumoniae), this protein is Heat-inducible transcription repressor HrcA.